The primary structure comprises 347 residues: MDSFFSTYVLPAIIMIGQSLLLLVCLLVFIAYVLLADRKIWAAVQLRRGPNVVGPFGLFQSFADLLKFVFKEPIIPAGANKAVFLLAPLVTVLLALSTWAVVPLADGWVIANINVGILYIFAISSLEVYGIIMGGWASNSKYPFLGALRSAAQMVSYEVSIGFVIVTVLLCVGSLNLTDIVNAQHTGLGTVLGLPASFLDWHWLSLFPMFIVFFISALAETNRPPFDLPEAESELVAGFMVEYGSSPYMMFMLGEYAAVCLMCALTTILFLGGWLPPVDIWILNWVPGIIWFTLKACLVFFMFAMVKAFVPRYRYDQLMRLGWKVFLPLSLAMVIIVAFVLKLMGWA.

A run of 9 helical transmembrane segments spans residues 13-33, 50-70, 82-102, 115-135, 161-181, 198-218, 263-283, 286-306, and 321-341; these read IIMI…IAYV, PNVV…KFVF, AVFL…WAVV, VGIL…IMGG, IGFV…TDIV, FLDW…ISAL, CALT…IWIL, VPGI…FAMV, and LGWK…AFVL.

The protein belongs to the complex I subunit 1 family. NDH-1 is composed of 14 different subunits. Subunits NuoA, H, J, K, L, M, N constitute the membrane sector of the complex.

The protein localises to the cell inner membrane. It catalyses the reaction a quinone + NADH + 5 H(+)(in) = a quinol + NAD(+) + 4 H(+)(out). Its function is as follows. NDH-1 shuttles electrons from NADH, via FMN and iron-sulfur (Fe-S) centers, to quinones in the respiratory chain. The immediate electron acceptor for the enzyme in this species is believed to be ubiquinone. Couples the redox reaction to proton translocation (for every two electrons transferred, four hydrogen ions are translocated across the cytoplasmic membrane), and thus conserves the redox energy in a proton gradient. This subunit may bind ubiquinone. This chain is NADH-quinone oxidoreductase subunit H 1, found in Rhizobium etli (strain ATCC 51251 / DSM 11541 / JCM 21823 / NBRC 15573 / CFN 42).